Consider the following 511-residue polypeptide: Sodium/proline symporter 2 (511 aa).

The next 13 helical transmembrane spans lie at 16–36, 54–74, 85–105, 139–159, 175–195, 204–224, 246–266, 286–306, 327–347, 381–401, 410–430, 438–458, and 467–487; these read WQTYIMIIIYFTILLFIGYYG, IGPYVTALSAGASDMSGWMIM, LSAMWITIGLSLGAYVNYFVV, IISGLIIVVFFTLYTHSGFVS, GLLMVAFIVIFYTFFGGYLAV, VIMLIAMVMVPIVALIDLNGI, VLGIISLFAWGLGYFGQPHII, ISWMVIGLLGAVAVGLTGIAF, ILFHPLVGGFLLAAILAAIMS, FLMVGRLSVLIVAIVAIWIAW, LVGNAWAGFGAAFSPLVIFSL, TGALAGMITGALVVIIWIVWI, and LFGMYEIIPGFLASVITTYFV.

This sequence belongs to the sodium:solute symporter (SSF) (TC 2.A.21) family.

Its subcellular location is the cell membrane. It carries out the reaction L-proline(in) + Na(+)(in) = L-proline(out) + Na(+)(out). Catalyzes the sodium-dependent uptake of extracellular L-proline. This chain is Sodium/proline symporter 2 (putP2), found in Staphylococcus saprophyticus subsp. saprophyticus (strain ATCC 15305 / DSM 20229 / NCIMB 8711 / NCTC 7292 / S-41).